Consider the following 355-residue polypeptide: F-box protein At1g31080 (355 aa).

The 46-residue stretch at 4–49 (GANSASIPNDLILEILSRLPAKSTGRFRCVSKLWGSMLCHSYFTEL) folds into the F-box domain. Residues 306–320 (AGTSRSPPKQSTSTS) show a composition bias toward polar residues. The tract at residues 306 to 333 (AGTSRSPPKQSTSTSSREDHEVRTLAHQ) is disordered. Positions 321–333 (SREDHEVRTLAHQ) are enriched in basic and acidic residues.

This Arabidopsis thaliana (Mouse-ear cress) protein is F-box protein At1g31080.